The primary structure comprises 317 residues: tRNA dimethylallyltransferase (317 aa).

16-23 is a binding site for ATP; sequence GPTASGKS. Residue 18–23 participates in substrate binding; the sequence is TASGKS. 3 interaction with substrate tRNA regions span residues 41–44, 165–169, and 247–252; these read DSAQ, QRIQR, and RCVGYR.

It belongs to the IPP transferase family. In terms of assembly, monomer. Requires Mg(2+) as cofactor.

It carries out the reaction adenosine(37) in tRNA + dimethylallyl diphosphate = N(6)-dimethylallyladenosine(37) in tRNA + diphosphate. In terms of biological role, catalyzes the transfer of a dimethylallyl group onto the adenine at position 37 in tRNAs that read codons beginning with uridine, leading to the formation of N6-(dimethylallyl)adenosine (i(6)A). The polypeptide is tRNA dimethylallyltransferase (Nitrosomonas europaea (strain ATCC 19718 / CIP 103999 / KCTC 2705 / NBRC 14298)).